Reading from the N-terminus, the 352-residue chain is Glycerol-1-phosphate dehydrogenase [NAD(P)+] (352 aa).

NAD(+) is bound by residues 99-103 and 121-124; these read GTKID and TSPS. Asp126 is a binding site for substrate. Ser130 is an NAD(+) binding site. Residue Asp173 coordinates substrate. Asp173 and His253 together coordinate Zn(2+). His257 serves as a coordination point for substrate. His269 contacts Zn(2+).

This sequence belongs to the glycerol-1-phosphate dehydrogenase family. It depends on Zn(2+) as a cofactor.

It localises to the cytoplasm. The enzyme catalyses sn-glycerol 1-phosphate + NAD(+) = dihydroxyacetone phosphate + NADH + H(+). It carries out the reaction sn-glycerol 1-phosphate + NADP(+) = dihydroxyacetone phosphate + NADPH + H(+). It functions in the pathway membrane lipid metabolism; glycerophospholipid metabolism. Its function is as follows. Catalyzes the NAD(P)H-dependent reduction of dihydroxyacetonephosphate (DHAP or glycerone phosphate) to glycerol 1-phosphate (G1P). The G1P thus generated is used as the glycerophosphate backbone of phospholipids in the cellular membranes of Archaea. The protein is Glycerol-1-phosphate dehydrogenase [NAD(P)+] of Thermoplasma volcanium (strain ATCC 51530 / DSM 4299 / JCM 9571 / NBRC 15438 / GSS1).